A 514-amino-acid chain; its full sequence is Protein spinster homolog 3 (514 aa).

The segment at M1–G22 is disordered. Residues Q9–G21 are compositionally biased toward low complexity. 12 consecutive transmembrane segments (helical) span residues V54 to L74, G88 to L108, A116 to S136, F149 to F169, C176 to G196, L212 to P232, F264 to W284, L313 to A333, L347 to A367, V376 to L396, V415 to L435, and S453 to L473. A disordered region spans residues A482–E514. The span at S497–E514 shows a compositional bias: polar residues.

It belongs to the major facilitator superfamily. Spinster (TC 2.A.1.49) family.

Its subcellular location is the membrane. In terms of biological role, sphingolipid transporter. This is Protein spinster homolog 3 (Spns3) from Mus musculus (Mouse).